A 440-amino-acid chain; its full sequence is Proline--tRNA ligase (440 aa).

It belongs to the class-II aminoacyl-tRNA synthetase family. ProS type 2 subfamily. Homodimer.

Its subcellular location is the cytoplasm. It catalyses the reaction tRNA(Pro) + L-proline + ATP = L-prolyl-tRNA(Pro) + AMP + diphosphate. In terms of biological role, catalyzes the attachment of proline to tRNA(Pro) in a two-step reaction: proline is first activated by ATP to form Pro-AMP and then transferred to the acceptor end of tRNA(Pro). The sequence is that of Proline--tRNA ligase from Rhizobium etli (strain ATCC 51251 / DSM 11541 / JCM 21823 / NBRC 15573 / CFN 42).